A 261-amino-acid polypeptide reads, in one-letter code: MAHQAHPYHMVDPSPWPLTGATAALLMTSGLAIWFHFHSLLLLYLGLTLLLLTMIQWWRDIIREGTFQGHHTPPVQKGLRYGMILFIVSEVFFFLGFFWAFYHSSLAPTPELGGCWPPTGINPLDPFEVPLLNTAVLLASGVTVTWAHHGLMEGNRKEAIQALTLTIILGVYFTALQAMEYYEAPFTIADGVYGTTFFVATGFHGLHVIIGSTFLAVCLLRQVLYHFTSEHHFGFEAAAWYWHFVDVVWLFLYVSIYWWGS.

Over 1-15 (MAHQAHPYHMVDPSP) the chain is Mitochondrial matrix. A helical membrane pass occupies residues 16-34 (WPLTGATAALLMTSGLAIW). At 35–40 (FHFHSL) the chain is on the mitochondrial intermembrane side. A helical membrane pass occupies residues 41–66 (LLLYLGLTLLLLTMIQWWRDIIREGT). The Mitochondrial matrix portion of the chain corresponds to 67–72 (FQGHHT). A helical transmembrane segment spans residues 73–105 (PPVQKGLRYGMILFIVSEVFFFLGFFWAFYHSS). The Mitochondrial intermembrane segment spans residues 106–128 (LAPTPELGGCWPPTGINPLDPFE). The helical transmembrane segment at 129 to 152 (VPLLNTAVLLASGVTVTWAHHGLM) threads the bilayer. Topologically, residues 153 to 155 (EGN) are mitochondrial matrix. A helical membrane pass occupies residues 156 to 183 (RKEAIQALTLTIILGVYFTALQAMEYYE). Residues 184-190 (APFTIAD) are Mitochondrial intermembrane-facing. A helical membrane pass occupies residues 191-223 (GVYGTTFFVATGFHGLHVIIGSTFLAVCLLRQV). Residues 224–232 (LYHFTSEHH) are Mitochondrial matrix-facing. Residues 233 to 256 (FGFEAAAWYWHFVDVVWLFLYVSI) form a helical membrane-spanning segment. Topologically, residues 257–261 (YWWGS) are mitochondrial intermembrane.

Belongs to the cytochrome c oxidase subunit 3 family. In terms of assembly, component of the cytochrome c oxidase (complex IV, CIV), a multisubunit enzyme composed of 14 subunits. The complex is composed of a catalytic core of 3 subunits MT-CO1, MT-CO2 and MT-CO3, encoded in the mitochondrial DNA, and 11 supernumerary subunits COX4I, COX5A, COX5B, COX6A, COX6B, COX6C, COX7A, COX7B, COX7C, COX8 and NDUFA4, which are encoded in the nuclear genome. The complex exists as a monomer or a dimer and forms supercomplexes (SCs) in the inner mitochondrial membrane with NADH-ubiquinone oxidoreductase (complex I, CI) and ubiquinol-cytochrome c oxidoreductase (cytochrome b-c1 complex, complex III, CIII), resulting in different assemblies (supercomplex SCI(1)III(2)IV(1) and megacomplex MCI(2)III(2)IV(2)).

Its subcellular location is the mitochondrion inner membrane. The catalysed reaction is 4 Fe(II)-[cytochrome c] + O2 + 8 H(+)(in) = 4 Fe(III)-[cytochrome c] + 2 H2O + 4 H(+)(out). Its function is as follows. Component of the cytochrome c oxidase, the last enzyme in the mitochondrial electron transport chain which drives oxidative phosphorylation. The respiratory chain contains 3 multisubunit complexes succinate dehydrogenase (complex II, CII), ubiquinol-cytochrome c oxidoreductase (cytochrome b-c1 complex, complex III, CIII) and cytochrome c oxidase (complex IV, CIV), that cooperate to transfer electrons derived from NADH and succinate to molecular oxygen, creating an electrochemical gradient over the inner membrane that drives transmembrane transport and the ATP synthase. Cytochrome c oxidase is the component of the respiratory chain that catalyzes the reduction of oxygen to water. Electrons originating from reduced cytochrome c in the intermembrane space (IMS) are transferred via the dinuclear copper A center (CU(A)) of subunit 2 and heme A of subunit 1 to the active site in subunit 1, a binuclear center (BNC) formed by heme A3 and copper B (CU(B)). The BNC reduces molecular oxygen to 2 water molecules using 4 electrons from cytochrome c in the IMS and 4 protons from the mitochondrial matrix. In Scyliorhinus canicula (Small-spotted catshark), this protein is Cytochrome c oxidase subunit 3 (MT-CO3).